The sequence spans 123 residues: Large ribosomal subunit protein uL29 (123 aa).

It belongs to the universal ribosomal protein uL29 family.

In Euphorbia esula (Leafy spurge), this protein is Large ribosomal subunit protein uL29 (RPL35).